Consider the following 353-residue polypeptide: MVLSLQTLTKKVLARQYPAQCHHHFLKCCGLWWHDGPIVYHQNQKKIWSSFFTDGVNINAALVKAVKENNYDLIVLFTEWGANIDYSLLSVNTECTRDLCRELGAKEQLKQQEVLHFFNMVKRDLTGSNIILCHEVFSHNPILETINRTKLRGIIYEQLEALMENTDILSELLTKYWYGMAVEFNLTKAIHYFYQRYAHLHQWRLMCALFYNNVFDLHELYTKEKVRMDMDEMLKWACRKNYNYLTIYYCCIVLGADLNKAMFHSIQFYNLGNIFFCIDLGADAFEEGKTVAYQNDKSFIASILSLNCYSKNDSLSLKETDPEVIKRMLKDYHSKNMSMAHKYYIKYGFDNID.

Belongs to the asfivirus MGF 360 family. As to quaternary structure, interacts with host STAT1; this interaction mediates STAT1 degradation through apoptosis. Interacts with host STAT2; this interaction mediates STAT2 degradation through the proteasome.

It is found in the host cytoplasm. In terms of biological role, plays a role in virus cell tropism, and may be required for efficient virus replication in macrophages. In addition, inhibits IFN-beta-induced IFN-stimulated genes (ISGs) transcription. Mechanistically, degrades host STAT1 and STAT2 through apoptosis and ubiquitin-proteasome pathways respectively. This chain is Protein MGF 360-9L, found in African swine fever virus (isolate Tick/Malawi/Lil 20-1/1983) (ASFV).